The chain runs to 136 residues: Histone H2A (136 aa).

Positions 1–11 (MSSGGKSGGKA) are enriched in gly residues. The segment at 1-24 (MSSGGKSGGKAGDASSKAQSRSAK) is disordered. 2 positions are modified to N6-acetyllysine: Lys6 and Lys10. Residues 12–24 (GDASSKAQSRSAK) show a composition bias toward low complexity. Gln108 carries the post-translational modification N5-methylglutamine. Ser133 is subject to Phosphoserine. Residues 133–134 (SQ) carry the [ST]-Q motif motif.

Belongs to the histone H2A family. The nucleosome is a histone octamer containing two molecules each of H2A, H2B, H3 and H4 assembled in one H3-H4 heterotetramer and two H2A-H2B heterodimers. The octamer wraps approximately 147 bp of DNA. In terms of processing, phosphorylated to form H2AS128ph (gamma-H2A) in response to DNA double-strand breaks (DSBs) generated by exogenous genotoxic agents and by stalled replication forks. Phosphorylation is dependent on the DNA damage checkpoint kinases MEC1/ATR and TEL1/ATM, spreads on either side of a detected DSB site and may mark the surrounding chromatin for recruitment of proteins required for DNA damage signaling and repair. Gamma-H2A is removed from the DNA prior to the strand invasion-primer extension step of the repair process and subsequently dephosphorylated. Dephosphorylation is necessary for efficient recovery from the DNA damage checkpoint. Post-translationally, acetylated by ESA1 to form H2AK4ac and H2AK7ac.

The protein localises to the nucleus. It localises to the chromosome. Functionally, core component of nucleosome which plays a central role in DNA double strand break (DSB) repair. Nucleosomes wrap and compact DNA into chromatin, limiting DNA accessibility to the cellular machineries which require DNA as a template. Histones thereby play a central role in transcription regulation, DNA repair, DNA replication and chromosomal stability. DNA accessibility is regulated via a complex set of post-translational modifications of histones, also called histone code, and nucleosome remodeling. The polypeptide is Histone H2A (HTA1) (Mycosarcoma maydis (Corn smut fungus)).